Consider the following 273-residue polypeptide: 2,3,4,5-tetrahydropyridine-2,6-dicarboxylate N-succinyltransferase (273 aa).

Substrate contacts are provided by Arg-104 and Asp-141.

It belongs to the transferase hexapeptide repeat family. Homotrimer.

The protein resides in the cytoplasm. It catalyses the reaction (S)-2,3,4,5-tetrahydrodipicolinate + succinyl-CoA + H2O = (S)-2-succinylamino-6-oxoheptanedioate + CoA. It participates in amino-acid biosynthesis; L-lysine biosynthesis via DAP pathway; LL-2,6-diaminopimelate from (S)-tetrahydrodipicolinate (succinylase route): step 1/3. This is 2,3,4,5-tetrahydropyridine-2,6-dicarboxylate N-succinyltransferase from Nitrosospira multiformis (strain ATCC 25196 / NCIMB 11849 / C 71).